Consider the following 380-residue polypeptide: Protein Wnt-5a (380 aa).

The first 35 residues, 1 to 35 (MKKSIGILSPGVALGTAGSAMSSKFFVMALAVFFS), serve as a signal peptide directing secretion. The propeptide occupies 36 to 61 (FAQVVIEANSWWSLGMNNPVQMSEVY). Cysteines 104 and 115 form a disulfide. 2 N-linked (GlcNAc...) asparagine glycosylation sites follow: Asn114 and Asn120. 10 disulfides stabilise this stretch: Cys154–Cys162, Cys164–Cys182, Cys238–Cys252, Cys240–Cys247, Cys309–Cys340, Cys325–Cys335, Cys339–Cys379, Cys355–Cys370, Cys357–Cys367, and Cys362–Cys363. A lipid anchor (O-palmitoleoyl serine; by PORCN) is attached at Ser244. Residues Asn312 and Asn326 are each glycosylated (N-linked (GlcNAc...) asparagine).

This sequence belongs to the Wnt family. As to quaternary structure, forms a soluble 1:1 complex with AFM; this prevents oligomerization and is required for prolonged biological activity. The complex with AFM may represent the physiological form in body fluids. Homooligomer; disulfide-linked, leading to inactivation (in vitro). Interacts with PORCN. Interacts with WLS. Interacts with glypican GCP3. Interacts with PKD1 (via extracellular domain). Interacts with TMEM67. Post-translationally, glycosylation is necessary for secretion but not for activity. Palmitoleoylation is required for efficient binding to frizzled receptors. Depalmitoleoylation leads to Wnt signaling pathway inhibition. In terms of processing, proteolytic processing by TIKI1 and TIKI2 promotes oxidation and formation of large disulfide-bond oligomers, leading to inactivation of WNT5A.

It is found in the secreted. The protein resides in the extracellular space. The protein localises to the extracellular matrix. In terms of biological role, ligand for members of the frizzled family of seven transmembrane receptors. Can activate or inhibit canonical Wnt signaling, depending on receptor context. In the presence of FZD4, activates beta-catenin signaling. In the presence of ROR2, inhibits the canonical Wnt pathway by promoting beta-catenin degradation through a GSK3-independent pathway which involves down-regulation of beta-catenin-induced reporter gene expression. Suppression of the canonical pathway allows chondrogenesis to occur. Inhibits tumor formation. Stimulates cell migration. Decreases proliferation, migration, invasiveness and clonogenicity of carcinoma cells and may act as a tumor suppressor. Mediates motility of melanoma cells. Required during embryogenesis for extension of the primary anterior-posterior axis and for outgrowth of limbs and the genital tubercle. Inhibits type II collagen expression in chondrocytes. The protein is Protein Wnt-5a of Oryctolagus cuniculus (Rabbit).